A 98-amino-acid polypeptide reads, in one-letter code: Protein E7 (98 aa).

The interval 1–40 (MHGDTPTLHEYMLDLQPETTDLYCYEQLNDSSEEEDEIDG) is E7 terminal domain. The LXCXE motif; interaction with host RB1 and TMEM173/STING signature appears at 22–26 (LYCYE). A zinc finger spans residues 58 to 94 (CCKCDSTLRLCVQSTHVDIRTLEDLLMGTLGIVCPIC). The short motif at 76–84 (IRTLEDLLM) is the Nuclear export signal element.

It belongs to the papillomaviridae E7 protein family. Homodimer. Homooligomer. Interacts with host RB1; this interaction induces dissociation of RB1-E2F1 complex thereby disrupting RB1 activity. Interacts with host EP300; this interaction represses EP300 transcriptional activity. Forms a complex with CHD4 and HDAC1, thereby altering the action of host histone deacetylation. A similar complex involving E7, CHD4 and HDAC2 may also form. Interacts with protein E2; this interaction inhibits E7 oncogenic activity. In terms of processing, highly phosphorylated.

It localises to the host cytoplasm. Its subcellular location is the host nucleus. In terms of biological role, plays a role in viral genome replication by driving entry of quiescent cells into the cell cycle. Stimulation of progression from G1 to S phase allows the virus to efficiently use the cellular DNA replicating machinery to achieve viral genome replication. E7 protein has both transforming and trans-activating activities. Induces the disassembly of the E2F1 transcription factor from RB1, with subsequent transcriptional activation of E2F1-regulated S-phase genes. Interferes with host histone deacetylation mediated by HDAC1 and HDAC2, leading to transcription activation. Also plays a role in the inhibition of both antiviral and antiproliferative functions of host interferon alpha. Interaction with host TMEM173/STING impairs the ability of TMEM173/STING to sense cytosolic DNA and promote the production of type I interferon (IFN-alpha and IFN-beta). In Human papillomavirus type 16, this protein is Protein E7.